The chain runs to 558 residues: Urocanate hydratase (558 aa).

NAD(+) is bound by residues 54–55 (GG), Q132, 178–180 (GMG), E198, 244–245 (NA), 265–269 (QTSAH), 275–276 (YL), and Y324. The active site involves C412. Residue G494 participates in NAD(+) binding.

The protein belongs to the urocanase family. The cofactor is NAD(+).

The protein localises to the cytoplasm. The enzyme catalyses 4-imidazolone-5-propanoate = trans-urocanate + H2O. The protein operates within amino-acid degradation; L-histidine degradation into L-glutamate; N-formimidoyl-L-glutamate from L-histidine: step 2/3. In terms of biological role, catalyzes the conversion of urocanate to 4-imidazolone-5-propionate. The sequence is that of Urocanate hydratase from Acinetobacter baumannii (strain AB307-0294).